A 273-amino-acid polypeptide reads, in one-letter code: Ribosomal RNA small subunit methyltransferase A (273 aa).

Residues asparagine 18, leucine 20, glycine 45, glutamate 66, aspartate 91, and asparagine 113 each contribute to the S-adenosyl-L-methionine site.

This sequence belongs to the class I-like SAM-binding methyltransferase superfamily. rRNA adenine N(6)-methyltransferase family. RsmA subfamily.

The protein resides in the cytoplasm. It carries out the reaction adenosine(1518)/adenosine(1519) in 16S rRNA + 4 S-adenosyl-L-methionine = N(6)-dimethyladenosine(1518)/N(6)-dimethyladenosine(1519) in 16S rRNA + 4 S-adenosyl-L-homocysteine + 4 H(+). Its function is as follows. Specifically dimethylates two adjacent adenosines (A1518 and A1519) in the loop of a conserved hairpin near the 3'-end of 16S rRNA in the 30S particle. May play a critical role in biogenesis of 30S subunits. This Cronobacter sakazakii (strain ATCC BAA-894) (Enterobacter sakazakii) protein is Ribosomal RNA small subunit methyltransferase A.